Here is a 700-residue protein sequence, read N- to C-terminus: Elongation factor G 1 (700 aa).

In terms of domain architecture, tr-type G spans 8 to 290 (QNYRNIGISA…AVIEFMPSPI (283 aa)). GTP-binding positions include 17–24 (AHIDAGKT), 88–92 (DTPGH), and 142–145 (NKMD).

The protein belongs to the TRAFAC class translation factor GTPase superfamily. Classic translation factor GTPase family. EF-G/EF-2 subfamily.

Its subcellular location is the cytoplasm. Functionally, catalyzes the GTP-dependent ribosomal translocation step during translation elongation. During this step, the ribosome changes from the pre-translocational (PRE) to the post-translocational (POST) state as the newly formed A-site-bound peptidyl-tRNA and P-site-bound deacylated tRNA move to the P and E sites, respectively. Catalyzes the coordinated movement of the two tRNA molecules, the mRNA and conformational changes in the ribosome. The polypeptide is Elongation factor G 1 (Polaromonas sp. (strain JS666 / ATCC BAA-500)).